Here is a 297-residue protein sequence, read N- to C-terminus: Inactive beta selinene synthase (297 aa).

This sequence belongs to the terpene synthase family. As to quaternary structure, monomer.

It is found in the cytoplasm. Functionally, inactive selinene synthase. This is Inactive beta selinene synthase from Zea mays (Maize).